We begin with the raw amino-acid sequence, 824 residues long: Lysine-specific histone demethylase 1B homolog (824 aa).

Positions 1 to 31 (MTTELEIDDRKEEEAQIPGETSESEEGDEPV) are disordered. In terms of domain architecture, SWIRM spans 245-346 (PFTDVIANIV…YGAFDFRIDP (102 aa)). FAD is bound by residues 352–407 (PKIA…AQII), Val-579, Glu-788, and 796–798 (QTM).

Belongs to the flavin monoamine oxidase family. The cofactor is FAD. As to expression, in hermaphrodites, expressed in gut cells, embryonic cells and sheath cells. Not expressed in sperm or pharyngeal neurons.

The protein localises to the nucleus. The enzyme catalyses N(6),N(6)-dimethyl-L-lysyl(4)-[histone H3] + 2 A + 2 H2O = L-lysyl(4)-[histone H3] + 2 formaldehyde + 2 AH2. Histone demethylase that demethylates di-methylated 'Lys-4' of histone H3, a specific tag for epigenetic transcriptional activation, thereby acting as a corepressor. Acts by oxidizing the substrate by FAD to generate the corresponding imine that is subsequently hydrolyzed. Plays a role in the mitotic development of the germline. May be involved in H3 demethylation in mitotic cells including gut and embryonic cells. Plays a role in sensitivity upon interstrand cross-link DNA damage, probably by positively regulating the expression of mlh-1. Plays a role in developmental growth and lifespan regulation in response to ultraviolet-induced damage. No obvious role in larval development, sex chromosome segregation or for regulating meiotic crossover frequency. The chain is Lysine-specific histone demethylase 1B homolog from Caenorhabditis elegans.